The primary structure comprises 369 residues: Fructose-bisphosphate aldolase (369 aa).

Residue Asp-40 coordinates dihydroxyacetone phosphate. Residues Ser-42 and Thr-45 each coordinate D-glyceraldehyde 3-phosphate. Arg-49 contributes to the beta-D-fructose 1,6-bisphosphate binding site. Lys-113 contributes to the D-glyceraldehyde 3-phosphate binding site. Residue Lys-152 coordinates dihydroxyacetone phosphate. Glu-195 serves as a coordination point for D-glyceraldehyde 3-phosphate. The Proton acceptor role is filled by Glu-195. Dihydroxyacetone phosphate is bound by residues Lys-237, Ser-279, and Gly-280. Lys-237 functions as the Schiff-base intermediate with dihydroxyacetone phosphate in the catalytic mechanism. Beta-D-fructose 1,6-bisphosphate is bound by residues 279–281 (SGG) and Ser-307. Positions 309 and 310 each coordinate dihydroxyacetone phosphate. Arg-310 is a binding site for beta-D-fructose 1,6-bisphosphate.

It belongs to the class I fructose-bisphosphate aldolase family. In terms of assembly, homotetramer. Interacts with TRAP (via cytoplasmic domain); the interaction prevents substrate binding and thereby inhibits aldolase activity. Interacts with MTRAP (via cytoplasmic domain); MTRAP phosphorylation may increase the binding to FBPA. Interact with RH1 (via cytoplasmic domain). Interacts with RH2b (via cytoplasmic domain). Interacts with RH4 (via cytoplasmic domain). Interacts with AMA1 (via cytoplasmic domain); the interaction is weak, however it may be increased upon AMA1 phosphorylation. Interacts with EBA140 (via cytoplasmic domain); the interaction is weak. Interacts with EBA175 (via cytoplasmic domain); the interaction is weak. Interacts with EBA181 (via cytoplasmic domain); the interaction is weak. Interacts with G-actin and F-actin. May interact with ACT2/actin II; the interaction inhibits FBPA catalytic activity. Interacts with human SLC4A1/band 3 (via N-terminus); the interaction inhibits FBPA catalytic activity.

The protein localises to the cytoplasm. It is found in the membrane. It localises to the host cell membrane. The enzyme catalyses beta-D-fructose 1,6-bisphosphate = D-glyceraldehyde 3-phosphate + dihydroxyacetone phosphate. Its pathway is carbohydrate degradation; glycolysis; D-glyceraldehyde 3-phosphate and glycerone phosphate from D-glucose: step 4/4. Its activity is regulated as follows. The cytoplasmic tail of TRAP and probably other adhesins acts as a competitive inhibitor as the binding sites of the glycolytic substrate fructose 1,6-bisphosphate and TRAP partially overlap. Plays a key role in glycolysis by catalyzing the cleavage of fructose 1,6-bisphosphate into dihydroxyacetone phosphate and glyceraldehyde 3-phosphate. Independently of its catalytic activity, connects the actin filaments, and thus the actomyosin motor, to cell surface adhesins of the thrombospondin-related anonymous protein (TRAP), the erythrocyte binding ligand (EBL) and reticulocyte binding homolog (RH) protein families; this interaction is probably involved in transducing the motor force across the parasite surface required for sporozoite and ookinete gliding motility and merozoite invasion. Stimulates actin polymerisation. The chain is Fructose-bisphosphate aldolase from Plasmodium falciparum (isolate 3D7).